Here is a 366-residue protein sequence, read N- to C-terminus: GTPase Obg (366 aa).

One can recognise an Obg domain in the interval 1–161 (MRFVDEARIQ…FNLRLELKIL (161 aa)). Positions 121–148 (SGGRGGKGNEHFKSSTMRAPRFSQPGEP) are disordered. The 173-residue stretch at 162–334 (ADAGLIGLPN…LVQELWQVCE (173 aa)) folds into the OBG-type G domain. Residues 168 to 175 (GLPNAGKS), 193 to 197 (FTTLT), 217 to 220 (DIPG), 287 to 290 (NKID), and 315 to 317 (SAR) contribute to the GTP site. 2 residues coordinate Mg(2+): Ser175 and Thr195.

Belongs to the TRAFAC class OBG-HflX-like GTPase superfamily. OBG GTPase family. Monomer. Mg(2+) is required as a cofactor.

The protein localises to the cytoplasm. Functionally, an essential GTPase which binds GTP, GDP and possibly (p)ppGpp with moderate affinity, with high nucleotide exchange rates and a fairly low GTP hydrolysis rate. Plays a role in control of the cell cycle, stress response, ribosome biogenesis and in those bacteria that undergo differentiation, in morphogenesis control. This Desulfovibrio desulfuricans (strain ATCC 27774 / DSM 6949 / MB) protein is GTPase Obg.